The chain runs to 588 residues: Outer membrane transporter CdiB (588 aa).

The POTRA domain maps to 104–179 (FTVSSIVVSG…GVLHITVMEG (76 aa)).

The protein belongs to the TPS (TC 1.B.20) family.

The protein localises to the cell outer membrane. In terms of biological role, potential outer membrane protein component of a toxin-immunity protein module, which functions as a cellular contact-dependent growth inhibition (CDI) system. CDI modules allow bacteria to communicate with and inhibit the growth of closely related neighboring bacteria in a contact-dependent fashion. This protein may be required for secretion and assembly of the CdiA toxin protein. Inhibitory cells must be in logarithmic (not stationary) phase to inhibit growth of their targets, while the presence of P or S but not type 1 pili protects the target cells against growth inhibition. Functionally, probable member of a two partner secretion pathway (TPS) in which it mediates the secretion of CdiA. This Escherichia coli protein is Outer membrane transporter CdiB.